We begin with the raw amino-acid sequence, 889 residues long: Terminal uridylyltransferase 3 (889 aa).

The segment at 123 to 151 adopts a C2H2-type; atypical zinc-finger fold; that stretch reads VRCDLCAKMIESRDEEQIQEHFQVHHAAL. Cys125, Cys128, His143, and His148 together coordinate Zn(2+). Residues Ser225 and 236–239 each bind UTP; that span reads SDAD. Mg(2+) is bound by residues Asp237 and Asp239. Arg286 contacts RNA. Residues 394–398, Lys419, Lys423, and 437–438 each bind UTP; these read GVRNS and SY. Residues 505–572 enclose the PAP-associated domain; it reads LGGLIPLFFL…LCIDDPYEDN (68 aa). Residues 565–574 carry the Nucleotide recognition motif (NRM) motif; sequence IDDPYEDNFN. 2 disordered regions span residues 675-702 and 829-849; these read NNKS…HVES and RKKS…NHAG. A compositionally biased stretch (basic residues) spans 829-846; the sequence is RKKSKGSKKRKNAVRRGN.

This sequence belongs to the DNA polymerase type-B-like family. Mg(2+) serves as cofactor. The cofactor is Mn(2+).

The protein resides in the cytoplasm. The catalysed reaction is RNA(n) + UTP = RNA(n)-3'-uridine ribonucleotide + diphosphate. Terminal uridylyltransferase which catalyzes the addition of Us to the 3'-hydroxyl group of single-stranded RNAs. Does not mediate RNA-independent UTP polymerization. This Trypanosoma brucei brucei protein is Terminal uridylyltransferase 3.